Here is a 156-residue protein sequence, read N- to C-terminus: CASP-like protein 5C1 (156 aa).

At 1 to 24 the chain is on the cytoplasmic side; it reads MENRERAGAGAVGSAGSLGLRVEQ. A helical transmembrane segment spans residues 25–45; it reads AVFSSASLLFMSVGVEFFSYT. A46 is a topological domain (extracellular). The chain crosses the membrane as a helical span at residues 47–67; it reads FCFLVTIMGLVIPWSCTLAMI. The Cytoplasmic segment spans residues 68 to 81; the sequence is DVYSILVGCPLRVP. Residues 82–102 traverse the membrane as a helical segment; sequence GVMVIVVIGDWVLAILSLAAA. Residues 103–132 are Extracellular-facing; sequence SSSAAVIDLLLQFHGSHCSPRFCGRYQLSA. The helical transmembrane segment at 133–153 threads the bilayer; the sequence is MMAFLSWFLTAASSLFNLWFI. Over 154–156 the chain is Cytoplasmic; it reads ASR.

The protein belongs to the Casparian strip membrane proteins (CASP) family. As to quaternary structure, homodimer and heterodimers.

The protein resides in the cell membrane. The chain is CASP-like protein 5C1 from Oryza sativa subsp. indica (Rice).